A 330-amino-acid polypeptide reads, in one-letter code: DNA-directed RNA polymerase subunit alpha (330 aa).

Residues 1–232 (MAILAFQKPD…YHFMLFSDEK (232 aa)) form an alpha N-terminal domain (alpha-NTD) region. Positions 248–330 (EEVLHMRQLL…DISKYKLDKE (83 aa)) are alpha C-terminal domain (alpha-CTD).

This sequence belongs to the RNA polymerase alpha chain family. Homodimer. The RNAP catalytic core consists of 2 alpha, 1 beta, 1 beta' and 1 omega subunit. When a sigma factor is associated with the core the holoenzyme is formed, which can initiate transcription.

It catalyses the reaction RNA(n) + a ribonucleoside 5'-triphosphate = RNA(n+1) + diphosphate. Functionally, DNA-dependent RNA polymerase catalyzes the transcription of DNA into RNA using the four ribonucleoside triphosphates as substrates. This Bacteroides thetaiotaomicron (strain ATCC 29148 / DSM 2079 / JCM 5827 / CCUG 10774 / NCTC 10582 / VPI-5482 / E50) protein is DNA-directed RNA polymerase subunit alpha.